The sequence spans 180 residues: NADH-quinone oxidoreductase subunit I (180 aa).

2 consecutive 4Fe-4S ferredoxin-type domains span residues 50 to 80 and 90 to 119; these read LTRDPDGEERCVACNLCAVACPVGCISLQKA and EFFRVNFSRCIFCGFCEEACPTTAIQLTPD. Positions 60, 63, 66, 70, 99, 102, 105, and 109 each coordinate [4Fe-4S] cluster.

The protein belongs to the complex I 23 kDa subunit family. In terms of assembly, NDH-1 is composed of 13 different subunits. Subunits NuoA, H, J, K, L, M, N constitute the membrane sector of the complex. Requires [4Fe-4S] cluster as cofactor.

It localises to the cell inner membrane. The catalysed reaction is a quinone + NADH + 5 H(+)(in) = a quinol + NAD(+) + 4 H(+)(out). Functionally, NDH-1 shuttles electrons from NADH, via FMN and iron-sulfur (Fe-S) centers, to quinones in the respiratory chain. The immediate electron acceptor for the enzyme in this species is believed to be ubiquinone. Couples the redox reaction to proton translocation (for every two electrons transferred, four hydrogen ions are translocated across the cytoplasmic membrane), and thus conserves the redox energy in a proton gradient. This chain is NADH-quinone oxidoreductase subunit I, found in Pectobacterium atrosepticum (strain SCRI 1043 / ATCC BAA-672) (Erwinia carotovora subsp. atroseptica).